Consider the following 174-residue polypeptide: Peptide methionine sulfoxide reductase MsrA (174 aa).

Residue C10 is part of the active site.

Belongs to the MsrA Met sulfoxide reductase family.

The catalysed reaction is L-methionyl-[protein] + [thioredoxin]-disulfide + H2O = L-methionyl-(S)-S-oxide-[protein] + [thioredoxin]-dithiol. The enzyme catalyses [thioredoxin]-disulfide + L-methionine + H2O = L-methionine (S)-S-oxide + [thioredoxin]-dithiol. Has an important function as a repair enzyme for proteins that have been inactivated by oxidation. Catalyzes the reversible oxidation-reduction of methionine sulfoxide in proteins to methionine. The sequence is that of Peptide methionine sulfoxide reductase MsrA from Paenarthrobacter aurescens (strain TC1).